Consider the following 405-residue polypeptide: mRNA cap guanine-N(7) methyltransferase (405 aa).

The interval 1–78 (MDNILNPEDN…PRLEEGHGSL (78 aa)) is disordered. Polar residues-rich tracts occupy residues 9–18 (DNVSQTNTET) and 36–45 (KFTASGQNLD). Positions 58–75 (KAGEPESPSKRPRLEEGH) are enriched in basic and acidic residues. The mRNA cap 0 methyltransferase domain occupies 97-404 (SRIFHLRNFN…IYLLFAFEKQ (308 aa)). An mRNA-binding site is contributed by 106–107 (NN). The S-adenosyl-L-methionine site is built by Lys-110, Gly-134, Asp-156, Asp-190, Gln-213, and Tyr-218.

The protein belongs to the class I-like SAM-binding methyltransferase superfamily. mRNA cap 0 methyltransferase family.

Its subcellular location is the nucleus. The enzyme catalyses a 5'-end (5'-triphosphoguanosine)-ribonucleoside in mRNA + S-adenosyl-L-methionine = a 5'-end (N(7)-methyl 5'-triphosphoguanosine)-ribonucleoside in mRNA + S-adenosyl-L-homocysteine. Functionally, catalytic subunit of the mRNA-capping methyltransferase RNMT:RAMAC complex that methylates the N7 position of the added guanosine to the 5'-cap structure of mRNAs. Binds RNA containing 5'-terminal GpppC. This chain is mRNA cap guanine-N(7) methyltransferase (rnmt), found in Xenopus tropicalis (Western clawed frog).